We begin with the raw amino-acid sequence, 229 residues long: Protein MC132 (229 aa).

In terms of assembly, interacts with host RELA (via RHD domain), ELOB, ELOC and CUL5; these interactions induce the proteasomal degradation of host RELA.

Its subcellular location is the host cytoplasm. In terms of biological role, inhibits host NF-kappa-B activation stimulated by IL-1 and multiple PRR viral detection pathways. Targets host NF-kappa-B component RELA/p65 for ubiquitin-dependent proteasomal degradation. This Homo sapiens (Human) protein is Protein MC132 (MC132).